The sequence spans 340 residues: Uroporphyrinogen decarboxylase (340 aa).

Substrate-binding positions include Arg23 to Arg27, Asp72, Tyr147, Thr202, and His316.

Belongs to the uroporphyrinogen decarboxylase family. Homodimer.

It is found in the cytoplasm. The enzyme catalyses uroporphyrinogen III + 4 H(+) = coproporphyrinogen III + 4 CO2. The protein operates within porphyrin-containing compound metabolism; protoporphyrin-IX biosynthesis; coproporphyrinogen-III from 5-aminolevulinate: step 4/4. In terms of biological role, catalyzes the decarboxylation of four acetate groups of uroporphyrinogen-III to yield coproporphyrinogen-III. The chain is Uroporphyrinogen decarboxylase from Pelobacter propionicus (strain DSM 2379 / NBRC 103807 / OttBd1).